Here is a 305-residue protein sequence, read N- to C-terminus: GMP synthase [glutamine-hydrolyzing] subunit B (305 aa).

A GMPS ATP-PPase domain is found at 2 to 184 (VKTEKFIQKS…LGLPPEIQHR (183 aa)). Residue 29–35 (SGGVDSS) coordinates ATP.

Heterodimer composed of a glutamine amidotransferase subunit (A) and a GMP-binding subunit (B).

The enzyme catalyses XMP + L-glutamine + ATP + H2O = GMP + L-glutamate + AMP + diphosphate + 2 H(+). It participates in purine metabolism; GMP biosynthesis; GMP from XMP (L-Gln route): step 1/1. Catalyzes the synthesis of GMP from XMP. This chain is GMP synthase [glutamine-hydrolyzing] subunit B, found in Methanoregula boonei (strain DSM 21154 / JCM 14090 / 6A8).